The following is a 190-amino-acid chain: MELILGSQSSARANLLKEHGIKFEQKALYFDEESLKTTDPREFVYLACKGKLEKAKKLLTNHCVIVVADSVVSVDNRMQRKAKNKQEALEFLKRQNGNEIEVLTCSALISPVLEWLDLSVFRARLKAFDSSEIEKYLESGLWQESAGCVRLEDFHRPYIKSSSKNLSVGLGLNVEGLLGALKLGAKLSLL.

The Proton acceptor role is filled by D69.

The protein belongs to the Maf family. It depends on a divalent metal cation as a cofactor.

The protein resides in the cytoplasm. It catalyses the reaction a ribonucleoside 5'-triphosphate + H2O = a ribonucleoside 5'-phosphate + diphosphate + H(+). The enzyme catalyses a 2'-deoxyribonucleoside 5'-triphosphate + H2O = a 2'-deoxyribonucleoside 5'-phosphate + diphosphate + H(+). In terms of biological role, nucleoside triphosphate pyrophosphatase. May have a dual role in cell division arrest and in preventing the incorporation of modified nucleotides into cellular nucleic acids. This chain is Nucleoside triphosphate pyrophosphatase, found in Helicobacter pylori (strain G27).